Consider the following 75-residue polypeptide: uncharacterized protein (75 aa).

This is an uncharacterized protein from Bacillus subtilis (strain 168).